An 819-amino-acid chain; its full sequence is Phenylalanine--tRNA ligase beta subunit (819 aa).

The region spanning 42-154 (RGGLRGLVIG…SDAPVGMPAA (113 aa)) is the tRNA-binding domain. Positions 412-488 (LKPHLISLSF…RIYGYNQVEL (77 aa)) constitute a B5 domain. Mg(2+) is bound by residues D466, D472, E475, and E476. The 94-residue stretch at 726–819 (PRFPEVKRDL…LEQKLGAQLR (94 aa)) folds into the FDX-ACB domain.

This sequence belongs to the phenylalanyl-tRNA synthetase beta subunit family. Type 1 subfamily. As to quaternary structure, tetramer of two alpha and two beta subunits. Mg(2+) serves as cofactor.

The protein resides in the cytoplasm. It catalyses the reaction tRNA(Phe) + L-phenylalanine + ATP = L-phenylalanyl-tRNA(Phe) + AMP + diphosphate + H(+). In Porphyromonas gingivalis (strain ATCC BAA-308 / W83), this protein is Phenylalanine--tRNA ligase beta subunit.